The primary structure comprises 544 residues: ATP-dependent RNA helicase HAS1 (544 aa).

Residues 1 to 10 (MSSTKPPTTT) are compositionally biased toward low complexity. Positions 1–59 (MSSTKPPTTTNKRKRTSNAHDEAPAKRVPEASSSKVTLDDSQPAPATSSDAVLGARSAP) are disordered. Over residues 18–29 (NAHDEAPAKRVP) the composition is skewed to basic and acidic residues. The span at 31-50 (ASSSKVTLDDSQPAPATSSD) shows a compositional bias: polar residues. Positions 66-94 (VPFSTLNLSPPTTAAIERMGFETMTEVQA) match the Q motif motif. One can recognise a Helicase ATP-binding domain in the interval 97–273 (IPPLLAGKDV…RISLRPGPLY (177 aa)). 110–117 (ARTGSGKT) lines the ATP pocket. A DEAD box motif is present at residues 220–223 (DEAD). Positions 287–456 (MLEQGYVVCE…DVQKQLESLI (170 aa)) constitute a Helicase C-terminal domain. A Bipartite nuclear localization signal motif is present at residues 299-315 (QRFMLLFTFLKKNLKKK). Residues 513–544 (GSVKAKKSRDEDESSDDDGQPKKAYYRNRGRK) form a disordered region.

This sequence belongs to the DEAD box helicase family. DDX18/HAS1 subfamily. Associates in the nucleolus with the 60S and pre-60S ribosomal subunits.

It localises to the nucleus. The protein resides in the nucleolus. The enzyme catalyses ATP + H2O = ADP + phosphate + H(+). Functionally, ATP-dependent RNA helicase involved in 40S ribosomal subunit biogenesis. Required for the processing and cleavage of 35S pre-rRNA at sites A0, A1, and A2, leading to mature 18S rRNA. The sequence is that of ATP-dependent RNA helicase HAS1 (HAS1) from Cryptococcus neoformans var. neoformans serotype D (strain JEC21 / ATCC MYA-565) (Filobasidiella neoformans).